The following is a 337-amino-acid chain: Fructose-1,6-bisphosphatase class 1 (337 aa).

Mg(2+) contacts are provided by Glu89, Asp112, Leu114, and Asp115. Substrate contacts are provided by residues Asp115 to Ser118, Asn208, Tyr241, and Lys271. Position 277 (Glu277) interacts with Mg(2+).

This sequence belongs to the FBPase class 1 family. As to quaternary structure, homotetramer. It depends on Mg(2+) as a cofactor.

It is found in the cytoplasm. It carries out the reaction beta-D-fructose 1,6-bisphosphate + H2O = beta-D-fructose 6-phosphate + phosphate. It participates in carbohydrate biosynthesis; gluconeogenesis. The polypeptide is Fructose-1,6-bisphosphatase class 1 (Psychromonas ingrahamii (strain DSM 17664 / CCUG 51855 / 37)).